The primary structure comprises 93 residues: Protein S100-A8 (93 aa).

2 consecutive EF-hand domains span residues 12–47 and 46–81; these read IIDV…QYIR and IRKK…MGVA. The Zn(2+) site is built by His-17 and His-27. Ca(2+) is bound at residue Asp-33. Cys-42 is modified (S-nitrosocysteine). Ca(2+)-binding residues include Asp-59, Asn-61, Asp-63, and Glu-70. His-83 and His-87 together coordinate Zn(2+).

This sequence belongs to the S-100 family. Homodimer. Preferentially exists as a heterodimer or heterotetramer with S100A9 known as calprotectin (S100A8/A9). S100A8 interacts with AGER, ATP2A2 and with the heterodimeric complex formed by TLR4 and LY96. Interacts with GAPDH. Calprotectin (S100A8/9) interacts with CEACAM3 and tubulin filaments in a calcium-dependent manner. Heterotetrameric calprotectin (S100A8/A9) interacts with ANXA6 and associates with tubulin filaments in activated monocytes. S100A8 and calprotectin (S100A8/9) interact with NCF2/P67PHOX, RAC1 and RAC2. Calprotectin (S100A8/9) interacts with CYBA and CYBB. Calprotectin (S100A8/9) interacts with NOS2 to form the iNOS-S100A8/A9 transnitrosylase complex; induced by LDL(ox). Calprotectin (S100A8/9) interacts with CD69. In terms of tissue distribution, calprotectin (S100A8/9) is predominantly expressed in myeloid cells. Except for inflammatory conditions, the expression is restricted to a specific stage of myeloid differentiation since both proteins are expressed in circulating neutrophils and monocytes but are absent in normal tissue macrophages and lymphocytes. Under chronic inflammatory conditions, such as psoriasis and malignant disorders, also expressed in the epidermis. Found in high concentrations at local sites of inflammation or in the serum of patients with inflammatory diseases such as rheumatoid, cystic fibrosis, inflammatory bowel disease, Crohn's disease, giant cell arteritis, cystic fibrosis, Sjogren's syndrome, systemic lupus erythematosus, and progressive systemic sclerosis. Involved in the formation and deposition of amyloids in the aging prostate known as corpora amylacea inclusions. Strongly up-regulated in many tumors, including gastric, esophageal, colon, pancreatic, bladder, ovarian, thyroid, breast and skin cancers.

The protein resides in the secreted. It is found in the cytoplasm. It localises to the cytoskeleton. Its subcellular location is the cell membrane. Its activity is regulated as follows. Calprotectin (S100A8/A9) activity on TLR4 signaling is inhibited by paquinimod. Its function is as follows. S100A8 is a calcium- and zinc-binding protein which plays a prominent role in the regulation of inflammatory processes and immune response. It can induce neutrophil chemotaxis and adhesion. Predominantly found as calprotectin (S100A8/A9) which has a wide plethora of intra- and extracellular functions. The intracellular functions include: facilitating leukocyte arachidonic acid trafficking and metabolism, modulation of the tubulin-dependent cytoskeleton during migration of phagocytes and activation of the neutrophilic NADPH-oxidase. Also participates in regulatory T-cell differentiation together with CD69. Activates NADPH-oxidase by facilitating the enzyme complex assembly at the cell membrane, transferring arachidonic acid, an essential cofactor, to the enzyme complex and S100A8 contributes to the enzyme assembly by directly binding to NCF2/P67PHOX. The extracellular functions involve pro-inflammatory, antimicrobial, oxidant-scavenging and apoptosis-inducing activities. Its pro-inflammatory activity includes recruitment of leukocytes, promotion of cytokine and chemokine production, and regulation of leukocyte adhesion and migration. Acts as an alarmin or a danger associated molecular pattern (DAMP) molecule and stimulates innate immune cells via binding to pattern recognition receptors such as Toll-like receptor 4 (TLR4) and receptor for advanced glycation endproducts (AGER). Binding to TLR4 and AGER activates the MAP-kinase and NF-kappa-B signaling pathways resulting in the amplification of the pro-inflammatory cascade. Has antimicrobial activity towards bacteria and fungi and exerts its antimicrobial activity probably via chelation of Zn(2+) which is essential for microbial growth. Can induce cell death via autophagy and apoptosis and this occurs through the cross-talk of mitochondria and lysosomes via reactive oxygen species (ROS) and the process involves BNIP3. Can regulate neutrophil number and apoptosis by an anti-apoptotic effect; regulates cell survival via ITGAM/ITGB and TLR4 and a signaling mechanism involving MEK-ERK. Its role as an oxidant scavenger has a protective role in preventing exaggerated tissue damage by scavenging oxidants. Can act as a potent amplifier of inflammation in autoimmunity as well as in cancer development and tumor spread. The iNOS-S100A8/A9 transnitrosylase complex directs selective inflammatory stimulus-dependent S-nitrosylation of GAPDH and probably multiple targets such as ANXA5, EZR, MSN and VIM by recognizing a [IL]-x-C-x-x-[DE] motif; S100A8 seems to contribute to S-nitrosylation site selectivity. In terms of biological role, (Microbial infection) Upon infection by human coronavirus SARS-CoV-2, may induce expansion of aberrant immature neutrophils in a TLR4-dependent manner. This Homo sapiens (Human) protein is Protein S100-A8.